The sequence spans 252 residues: Large ribosomal subunit protein uL30 (252 aa).

It belongs to the universal ribosomal protein uL30 family.

Functionally, binds to G-rich structures in 28S rRNA and in mRNAs. Plays a regulatory role in the translation apparatus; inhibits cell-free translation of mRNAs. The polypeptide is Large ribosomal subunit protein uL30 (RpL7) (Drosophila melanogaster (Fruit fly)).